Consider the following 38-residue polypeptide: Potassium channel toxin alpha-KTx 2.13 (38 aa).

3 disulfide bridges follow: C7–C29, C13–C34, and C17–C36.

It belongs to the short scorpion toxin superfamily. Potassium channel inhibitor family. Alpha-KTx 02 subfamily. In terms of tissue distribution, expressed by the venom gland.

Its subcellular location is the secreted. Selective inhibitor of voltage-gated potassium channels, blocks the Kv1.2/KCNA2 (Kd=1.3 nM) and Kv1.3/KCNA3 (Kd=7.2 nM) channels. Association and dissociation rates of the toxin are slower for Kv1.2/KCNA2 than for Kv1.3/KCNA3. This Centruroides suffusus (Durango bark scorpion) protein is Potassium channel toxin alpha-KTx 2.13.